Here is a 256-residue protein sequence, read N- to C-terminus: Nuclear shuttle protein (256 aa).

The Bipartite nuclear localization signal motif lies at 21 to 42; the sequence is NYGFKRTFVVKRGDAKRRQTQV. A Nuclear localization signal motif is present at residues 81–96; sequence QLCKTQPNRSRSYIKL. The interaction with Arabidopsis thaliana NSI protein stretch occupies residues 150–187; sequence ELFGARIHSLGNLAVTPALKERFYILHVLKRVISVEKD.

It belongs to the begomovirus nuclear shuttle protein family. Binds to single-stranded and double-stranded viral DNA. Interacts with the host nuclear shuttle interacting (NSI) protein. This interaction may allow NSP to recruit NSI monomers to the viral genome and thus regulate nuclear export of viral genome by NSP.

Its subcellular location is the host nucleus. It is found in the host cytoplasm. The protein resides in the host cell membrane. Its function is as follows. Binds to the genomic viral ssDNA, shuttles it into and out of the cell nucleus. Begomoviruses use 2 proteins to transport their DNA from cell to cell. The nuclear shuttle protein (NSP) shuttles it between nucleus and cytoplasm and the movement protein (MP) probably transports the DNA-NSP complex to the cell periphery and facilitates movement across the cell wall. This Pepper huasteco yellow vein virus (PHYVV) protein is Nuclear shuttle protein.